The sequence spans 883 residues: Puromycin-sensitive aminopeptidase (883 aa).

Substrate contacts are provided by residues Glu125 and 265-269 (GAMEN). A Zn(2+)-binding site is contributed by His301. Glu302 functions as the Proton acceptor in the catalytic mechanism. His305 and Glu324 together coordinate Zn(2+).

Belongs to the peptidase M1 family. The cofactor is Zn(2+).

It catalyses the reaction Release of an N-terminal amino acid, preferentially alanine, from a wide range of peptides, amides and arylamides.. With respect to regulation, strongly inhibited by puromycin and DAMPAQ-22. In terms of biological role, aminopeptidase with broad substrate specificity for several peptides. Involved in proteolytic events essential for cell growth and viability. Plays an essential role during prophase I of meiosis. Required for correct meiotic reconbination in both male and female gametophytes. The sequence is that of Puromycin-sensitive aminopeptidase (MPA1) from Arabidopsis thaliana (Mouse-ear cress).